The sequence spans 169 residues: Transmembrane protein 89 (169 aa).

Residues 1–22 (MLYTLLLVPSLFLLVMPVPSQG) form the signal peptide. Residues 23-75 (WSRPLWYQVGLDLQPWGCQPNSPDIWGCQPNSLDSCKNSLGCPGYWLGLGGNR) are Extracellular-facing. A helical membrane pass occupies residues 76–96 (IYPVAGVTITTTMLLVVSRVI). Over 97–169 (VHRWRAKVAK…QIKGSPPQSG (73 aa)) the chain is Cytoplasmic.

It is found in the membrane. This chain is Transmembrane protein 89 (Tmem89), found in Mus musculus (Mouse).